We begin with the raw amino-acid sequence, 329 residues long: MTADPGSSVPPAVVHRPVMVDRVVELLLPALGYPGAIVVDATVGLGGHAEAVVRAASAATLIGLDHDPHAIRLAAQRLAGYADRVQLVNVAFDRLAQVLSERGISAVAAILFDLGLSSLHIDDPARGFAYSRDVPLDMRMDPRLPRTAADVVNTYSATELARVLRVYGEERFAVRIADAIVRRRARQPITSTRDLSELVREAIPAPARRTGGHPAKRTFQALRIEVNDELGRLERTLPVAIAALQPGGRIVVLSYHSLEDRTVKRFFQAAASDATPAGLPTALPTARPRLRLLTRGAERPSPAEVAANPRAASARLRAAEKIRDTREAA.

Residues Gly46 to His48, Asp65, Phe92, Asp113, and His120 each bind S-adenosyl-L-methionine. Residues Arg295 to Ala329 form a disordered region. The span at Arg317–Ala329 shows a compositional bias: basic and acidic residues.

It belongs to the methyltransferase superfamily. RsmH family.

It is found in the cytoplasm. It catalyses the reaction cytidine(1402) in 16S rRNA + S-adenosyl-L-methionine = N(4)-methylcytidine(1402) in 16S rRNA + S-adenosyl-L-homocysteine + H(+). Specifically methylates the N4 position of cytidine in position 1402 (C1402) of 16S rRNA. The protein is Ribosomal RNA small subunit methyltransferase H of Acidothermus cellulolyticus (strain ATCC 43068 / DSM 8971 / 11B).